A 164-amino-acid polypeptide reads, in one-letter code: Cyclic pyranopterin monophosphate synthase (164 aa).

Residues 75 to 77 and 116 to 117 contribute to the substrate site; these read MCH and ME. The active site involves Asp131.

Belongs to the MoaC family. In terms of assembly, homohexamer; trimer of dimers.

It catalyses the reaction (8S)-3',8-cyclo-7,8-dihydroguanosine 5'-triphosphate = cyclic pyranopterin phosphate + diphosphate. It participates in cofactor biosynthesis; molybdopterin biosynthesis. In terms of biological role, catalyzes the conversion of (8S)-3',8-cyclo-7,8-dihydroguanosine 5'-triphosphate to cyclic pyranopterin monophosphate (cPMP). In Staphylococcus aureus (strain bovine RF122 / ET3-1), this protein is Cyclic pyranopterin monophosphate synthase.